The sequence spans 245 residues: 1-(5-phosphoribosyl)-5-[(5-phosphoribosylamino)methylideneamino] imidazole-4-carboxamide isomerase (245 aa).

D8 functions as the Proton acceptor in the catalytic mechanism. Residue D131 is the Proton donor of the active site.

Belongs to the HisA/HisF family.

The protein localises to the cytoplasm. The enzyme catalyses 1-(5-phospho-beta-D-ribosyl)-5-[(5-phospho-beta-D-ribosylamino)methylideneamino]imidazole-4-carboxamide = 5-[(5-phospho-1-deoxy-D-ribulos-1-ylimino)methylamino]-1-(5-phospho-beta-D-ribosyl)imidazole-4-carboxamide. It functions in the pathway amino-acid biosynthesis; L-histidine biosynthesis; L-histidine from 5-phospho-alpha-D-ribose 1-diphosphate: step 4/9. This is 1-(5-phosphoribosyl)-5-[(5-phosphoribosylamino)methylideneamino] imidazole-4-carboxamide isomerase from Neisseria meningitidis serogroup C / serotype 2a (strain ATCC 700532 / DSM 15464 / FAM18).